Reading from the N-terminus, the 429-residue chain is MSSPPPAAAAAMAVDDADDDQLASMSTEDIVRATRLLDNETRVLKDELQRTNLEVESYKEKIKENQEKIKLNKQLPYLVGNIVEILEMNPEDEAEEDGANIDLDSQRKGKCVVLKTSTRQTIFLPVIGLVDPEKLKPGDLVGVNKDSYLILDTLPSEYDSRVKAMEVDEKPTEDYNDIGGLEKQIQELVEAIVLPMTHKDRFQKLGIRPPKGVLLYGPPGTGKTLMARACAAQTNATFLKLAGPQLVQMFIGDGAKLVRDAFQLAKEKSPCIIFIDEIDAIGTKRFDSEVSGDREVQRTMLELLNQLDGFSSDERIKVIAATNRADILDPALMRSGRLDRKIEFPHPSEEARARILQIHSRKMNVNPDVNFEELARSTDDFNGAQLKAVCVEAGMLALRRDATEVTHEDFNEGIIQVQAKKKSSLNYYA.

The segment at 1–21 is disordered; that stretch reads MSSPPPAAAAAMAVDDADDDQ. 217 to 224 serves as a coordination point for ATP; it reads GPPGTGKT.

Belongs to the AAA ATPase family.

Its subcellular location is the cytoplasm. It is found in the nucleus. In terms of biological role, the 26S proteasome is involved in the ATP-dependent degradation of ubiquitinated proteins. The regulatory (or ATPase) complex confers ATP dependency and substrate specificity to the 26S complex. In Oryza sativa subsp. japonica (Rice), this protein is 26S proteasome regulatory subunit 6A homolog (TBP1).